A 234-amino-acid polypeptide reads, in one-letter code: Large ribosomal subunit protein uL1 (234 aa).

The protein belongs to the universal ribosomal protein uL1 family. Part of the 50S ribosomal subunit.

Binds directly to 23S rRNA. The L1 stalk is quite mobile in the ribosome, and is involved in E site tRNA release. Functionally, protein L1 is also a translational repressor protein, it controls the translation of the L11 operon by binding to its mRNA. The sequence is that of Large ribosomal subunit protein uL1 from Klebsiella pneumoniae (strain 342).